A 328-amino-acid chain; its full sequence is MKCGNREIFVKTQESTNPEWGKPPSKRTTEEYIRYSLVLIDKPRGPSSHEVAAWVKKILGVERAGHAGTLDPKVSGVLPIAVAEGTKALLALSRSDKVYVAVAKFHGDVDEEKLKAVLNEFQGVIYQKPPLRSSVKRQLRTRHVYSLELLELDGRYAVIKMHVEAGTYARKLIHDIGEVLGVGANMRELRRIAVSCYTEDETVALQDVADAYYIWRRYGDDTYLRRVLLPIEEIARHLPKIWVRDSAVDALCNGAPLAAPGVVKFETPFSKGELVAFFTLKDELIGFGRALVESEEAKKMERGLVARVDRVIMRRGTYPPMWKRKQQT.

The active-site Nucleophile is Asp71. Positions Leu238–Met313 constitute a PUA domain.

Belongs to the pseudouridine synthase TruB family. Type 2 subfamily.

The catalysed reaction is uridine(55) in tRNA = pseudouridine(55) in tRNA. Its function is as follows. Could be responsible for synthesis of pseudouridine from uracil-55 in the psi GC loop of transfer RNAs. This Pyrobaculum islandicum (strain DSM 4184 / JCM 9189 / GEO3) protein is Probable tRNA pseudouridine synthase B.